The following is a 779-amino-acid chain: Lysosome membrane protein 2-A (779 aa).

Over 1–17 (MVKRGCCHRKMVNHKGC) the chain is Cytoplasmic. Residues 18–38 (LVSGIFLAVIGAVLFILAFAL) traverse the membrane as a helical segment. At 39–732 (LPHLINQTTQ…LLNSQFKLIK (694 aa)) the chain is on the lumenal side. N-linked (GlcNAc...) asparagine glycosylation is found at asparagine 44, asparagine 86, asparagine 95, asparagine 114, asparagine 117, asparagine 201, asparagine 239, asparagine 262, asparagine 266, asparagine 277, asparagine 369, asparagine 410, asparagine 440, asparagine 508, asparagine 543, asparagine 601, asparagine 619, asparagine 651, and asparagine 693. The chain crosses the membrane as a helical span at residues 733–753 (ILGFVPVIVVSIIGGIILIAG). Residues 754–779 (ISMFAFGFKKLRQQKQQGYQAIINNE) are Cytoplasmic-facing. A Tyrosine-type lysosomal sorting signal motif is present at residues 771–774 (GYQA).

It belongs to the CD36 family. Heavily glycosylated.

It localises to the lysosome membrane. In terms of biological role, may act as a lysosomal receptor. May be involved in macropinocytosis and fluid phase exocytosis. Binds to the anionic phospholipid phosphoinositol 4,5-bisphosphate, but not to phosphatidylcholine and only weakly to phosphatidylserine. The polypeptide is Lysosome membrane protein 2-A (lmpA) (Dictyostelium discoideum (Social amoeba)).